The chain runs to 670 residues: Zinc finger protein 233 (670 aa).

In terms of domain architecture, KRAB spans 8–79 (VTFKDVAVVF…ETEIQGDGCS (72 aa)). The C2H2-type 1; degenerate zinc-finger motif lies at 258 to 280 (QTSDENGKGLSVGSNLELHQQLH). Residues 311-336 (EKCYRNGDSGEGFSQGSHLQPHQRVS) form a C2H2-type 2; degenerate zinc finger. Residues 342–364 (YRCQVYARSSNQNSCLPSHELTH) form a C2H2-type 3; degenerate zinc finger. A C2H2-type 4; degenerate zinc finger spans residues 370 to 392 (CTCGRCGKGFHHSLDFDIHCVDS). The segment at 398–420 (CKCDVYDKGFSQTSQLQAHQRGH) adopts a C2H2-type 5; degenerate zinc-finger fold. 7 C2H2-type zinc fingers span residues 452 to 474 (YKCEVCDKGFSKASNLQAHQRIH), 480 to 502 (YKCDVCDKNFSRNSHLQAHQRVH), 508 to 530 (YKCDTCGKDFSQISHLQAHQRVH), 536 to 558 (YKCETCGKGFSQSSHLQDHQQVH), 564 to 586 (YKCDVCGKGFSWSSHLQAHQRVH), 592 to 614 (YKCEECRKGFIWNSYLHVHQRIH), and 620 to 642 (YKCGMCGKSFSQTSHLQAHQRVH).

Belongs to the krueppel C2H2-type zinc-finger protein family.

The protein localises to the nucleus. May be involved in transcriptional regulation. This chain is Zinc finger protein 233 (ZNF233), found in Homo sapiens (Human).